Here is a 172-residue protein sequence, read N- to C-terminus: MPPFRAVILFRHMEINVIVKPPFKKLVSTPFLKKIASKTLKAQAADPNSELGIVITGQEEIKDLNLKYRGLDEPTDVLSFYMLEENPENLTAADDFPTPPDENIHLGEVIISYPQAELQATAASHSVSHEIAFLLIHGVLHLLGYDHHEVVAEAVMKSHQDIAMKHIREILE.

Zn(2+) contacts are provided by His-137, His-141, and His-147.

The protein belongs to the endoribonuclease YbeY family. The cofactor is Zn(2+).

The protein resides in the cytoplasm. Functionally, single strand-specific metallo-endoribonuclease involved in late-stage 70S ribosome quality control and in maturation of the 3' terminus of the 16S rRNA. The polypeptide is Endoribonuclease YbeY (Dehalococcoides mccartyi (strain ATCC BAA-2266 / KCTC 15142 / 195) (Dehalococcoides ethenogenes (strain 195))).